The primary structure comprises 420 residues: Replication factor C large subunit (420 aa).

An ATP-binding site is contributed by 46–53 (GVQGSGKT).

This sequence belongs to the activator 1 small subunits family. RfcL subfamily. In terms of assembly, heteromultimer composed of small subunits (RfcS) and large subunits (RfcL).

Its function is as follows. Part of the RFC clamp loader complex which loads the PCNA sliding clamp onto DNA. The chain is Replication factor C large subunit from Thermoplasma volcanium (strain ATCC 51530 / DSM 4299 / JCM 9571 / NBRC 15438 / GSS1).